The chain runs to 290 residues: 4-hydroxy-tetrahydrodipicolinate synthase (290 aa).

Thr-44 is a pyruvate binding site. Tyr-132 functions as the Proton donor/acceptor in the catalytic mechanism. Catalysis depends on Lys-160, which acts as the Schiff-base intermediate with substrate. Pyruvate is bound at residue Ile-202.

It belongs to the DapA family. As to quaternary structure, homotetramer; dimer of dimers.

It localises to the cytoplasm. It catalyses the reaction L-aspartate 4-semialdehyde + pyruvate = (2S,4S)-4-hydroxy-2,3,4,5-tetrahydrodipicolinate + H2O + H(+). The protein operates within amino-acid biosynthesis; L-lysine biosynthesis via DAP pathway; (S)-tetrahydrodipicolinate from L-aspartate: step 3/4. In terms of biological role, catalyzes the condensation of (S)-aspartate-beta-semialdehyde [(S)-ASA] and pyruvate to 4-hydroxy-tetrahydrodipicolinate (HTPA). The polypeptide is 4-hydroxy-tetrahydrodipicolinate synthase (Alkaliphilus oremlandii (strain OhILAs) (Clostridium oremlandii (strain OhILAs))).